The chain runs to 161 residues: Phosphopantetheine adenylyltransferase (161 aa).

Serine 9 contacts substrate. ATP contacts are provided by residues 9-10 (SF) and histidine 17. Lysine 41, threonine 73, and arginine 87 together coordinate substrate. Residues 88–90 (GLR), glutamate 98, and 123–129 (YSFISST) contribute to the ATP site.

Belongs to the bacterial CoaD family. In terms of assembly, homohexamer. The cofactor is Mg(2+).

The protein localises to the cytoplasm. It carries out the reaction (R)-4'-phosphopantetheine + ATP + H(+) = 3'-dephospho-CoA + diphosphate. It functions in the pathway cofactor biosynthesis; coenzyme A biosynthesis; CoA from (R)-pantothenate: step 4/5. Reversibly transfers an adenylyl group from ATP to 4'-phosphopantetheine, yielding dephospho-CoA (dPCoA) and pyrophosphate. This chain is Phosphopantetheine adenylyltransferase, found in Desulforamulus reducens (strain ATCC BAA-1160 / DSM 100696 / MI-1) (Desulfotomaculum reducens).